A 233-amino-acid chain; its full sequence is Protein Mis18-alpha (233 aa).

3 positions are modified to phosphoserine: serine 36, serine 39, and serine 40. Residues 80 to 178 form the Mis18 domain; that stretch reads PLVFLCSGCR…NVEAVESYVL (99 aa). Cysteine 85, cysteine 88, cysteine 141, and cysteine 144 together coordinate Zn(2+). Lysine 162 is covalently cross-linked (Glycyl lysine isopeptide (Lys-Gly) (interchain with G-Cter in SUMO2)). Serine 233 carries the phosphoserine modification.

Belongs to the mis18 family. In terms of assembly, homodimer, and heterodimer with OIP5/MIS18B. Identified in a complex containing MIS18A, OIP5/MIS18B, MIS18BP1, RBBP7 and RBBP4.

It is found in the nucleus. The protein localises to the chromosome. The protein resides in the centromere. In terms of biological role, required for recruitment of CENPA to centromeres and normal chromosome segregation during mitosis. In Plecturocebus moloch (Dusky titi monkey), this protein is Protein Mis18-alpha (MIS18A).